A 500-amino-acid chain; its full sequence is Zinc finger protein 689 (500 aa).

Residues 1 to 24 (MAPPSAPLLEQAPGEVGPTRRRGR) are disordered. The KRAB domain occupies 29–100 (LKFADVAVYF…AALDPQEYRR (72 aa)). The segment at 110–144 (TRQKNEEKEVFPPKDVPRKGKRGRKPSKPRLIARQ) is disordered. A compositionally biased stretch (basic and acidic residues) spans 112 to 127 (QKNEEKEVFPPKDVPR). A compositionally biased stretch (basic residues) spans 128-137 (KGKRGRKPSK). A C2H2-type 1; degenerate zinc finger spans residues 149–171 (PICPDCGCTFPDLPALESHKCAQ). 10 consecutive C2H2-type zinc fingers follow at residues 177–199 (YPCP…RRAH), 205–227 (YVCD…QVIH), 233–255 (YHCP…RTTH), 261–283 (HQCP…QRTH), 289–311 (YTCL…QRIH), 317–339 (YPCP…RRVH), 345–367 (YACE…QLLH), 373–395 (YPCP…RSTH), 401–423 (HACD…RRVH), and 429–451 (YACD…QLLH). Lysine 455 is covalently cross-linked (Glycyl lysine isopeptide (Lys-Gly) (interchain with G-Cter in SUMO2)). Residues 457–482 (FPCLECGRCFRQRWSLAVHKCCPNTH) form a C2H2-type 12 zinc finger.

The protein belongs to the krueppel C2H2-type zinc-finger protein family.

It localises to the nucleus. Functionally, may be involved in transcriptional regulation. The protein is Zinc finger protein 689 (Znf689) of Rattus norvegicus (Rat).